The following is a 935-amino-acid chain: Progesterone receptor (935 aa).

The AF3; mediates transcriptional activation stretch occupies residues 1 to 164; the sequence is MTELKAKGPR…PATQGVLSPL (164 aa). Residues 1–254 are disordered; that stretch reads MTELKAKGPR…GGAAAGGGAA (254 aa). A modulating, Pro-Rich region spans residues 1 to 568; it reads MTELKAKGPR…YSFESLPQKI (568 aa). Serine 20 carries the phosphoserine modification. An LXXL motif 1 motif is present at residues 55-59; that stretch reads LDGLL. Residue serine 81 is modified to Phosphoserine. The LXXL motif 2 motif lies at 115–119; that stretch reads LDTLL. Phosphoserine is present on residues serine 130 and serine 162. The tract at residues 165–305 is mediates transcriptional transrepression; sequence MSRSGGKAGD…LATTVMDFIH (141 aa). The Nuclear localization signal signature appears at 183 to 187; the sequence is KVLPR. Serine 190 and serine 213 each carry phosphoserine. Over residues 220-231 the composition is skewed to acidic residues; it reads EVEEEDGSESED. Low complexity predominate over residues 232 to 246; it reads SAGPLLKGKPRALGG. Serine 294 bears the Phosphoserine; by MAPK1 mark. The tract at residues 331–378 is disordered; sequence GGAGAASAFAPPRSSPSASSTPVAVGDFPDCAYPPDAEPKDDAYPLYS. Residues 335–350 are compositionally biased toward low complexity; the sequence is AASAFAPPRSSPSASS. Serine 345 is subject to Phosphoserine; by MAPK. Lysine 388 is covalently cross-linked (Glycyl lysine isopeptide (Lys-Gly) (interchain with G-Cter in SUMO); alternate). Lysine 388 is covalently cross-linked (Glycyl lysine isopeptide (Lys-Gly) (interchain with G-Cter in ubiquitin); alternate). The residue at position 400 (serine 400) is a Phosphoserine; by CDK2. A compositionally biased stretch (pro residues) spans 418-430; the sequence is PLGPPPPLPPRAP. The segment at 418 to 438 is disordered; the sequence is PLGPPPPLPPRAPPTRAGEAA. The AF1; mediates transcriptional activation stretch occupies residues 456-548; sequence STLECILYKA…VYPPYLNYLR (93 aa). A Glycyl lysine isopeptide (Lys-Gly) (interchain with G-Cter in SUMO) cross-link involves residue lysine 533. 2 consecutive NR C4-type zinc fingers follow at residues 569–589 and 605–629; these read CLIC…CGSC and CAGR…LRKC. Positions 569–641 form a DNA-binding region, nuclear receptor; the sequence is CLICGDEASG…AGMVLGGRKF (73 aa). Serine 678 bears the Phosphoserine mark. Residues 681 to 915 form the NR LBD domain; that stretch reads QDIQLIPPLI…EFPEMMSEVI (235 aa). The tract at residues 689–935 is AF2; mediates transcriptional activation; that stretch reads LINLLMSIEP…MVKPLLFHKK (247 aa).

It belongs to the nuclear hormone receptor family. Interacts with SMARD1 and UNC45A. Interacts with CUEDC2; the interaction promotes ubiquitination, decreases sumoylation, and represses transcriptional activity. Interacts with PIAS3; the interaction promotes sumoylation of PR in a hormone-dependent manner, inhibits DNA-binding, and alters nuclear export. Interacts with SP1; the interaction requires ligand-induced phosphorylation on Ser-345 by ERK1/2-MAPK. Interacts with PRMT2. Interacts with NCOA2 and NCOA1. Interacts with KLF9. Interacts with GTF2B. In terms of processing, phosphorylated on multiple serine sites. Several of these sites are hormone-dependent. Phosphorylation on Ser-294 is highly hormone-dependent and modulates ubiquitination and sumoylation on Lys-388. Phosphorylation on Ser-102 and Ser-345 also requires induction by hormone. Basal phosphorylation on Ser-81, Ser-162, Ser-190 and Ser-400 is increased in response to progesterone and can be phosphorylated in vitro by the CDK2-A1 complex. Increased levels of phosphorylation on Ser-400 also in the presence of EGF, heregulin, IGF, PMA and FBS. Phosphorylation at this site by CDK2 is ligand-independent, and increases nuclear translocation and transcriptional activity. Phosphorylation at Ser-162 and Ser-294, but not at Ser-190, is impaired during the G(2)/M phase of the cell cycle. Phosphorylation on Ser-345 by ERK1/2 MAPK is required for interaction with SP1. Sumoylation is hormone-dependent and represses transcriptional activity. Sumoylation on all three sites is enhanced by PIAS3. Desumoylated by SENP1. Sumoylation on Lys-388, the main site of sumoylation, is repressed by ubiquitination on the same site, and modulated by phosphorylation at Ser-294. Post-translationally, ubiquitination is hormone-dependent and represses sumoylation on the same site. Promoted by MAPK-mediated phosphorylation on Ser-294. In terms of processing, palmitoylated by ZDHHC7 and ZDHHC21. Palmitoylation is required for plasma membrane targeting and for rapid intracellular signaling via ERK and AKT kinases and cAMP generation.

It localises to the nucleus. The protein resides in the cytoplasm. In terms of biological role, the steroid hormones and their receptors are involved in the regulation of eukaryotic gene expression and affect cellular proliferation and differentiation in target tissues. Transcriptional activator of several progesteron-dependent promoters in a variety of cell types. Involved in activation of SRC-dependent MAPK signaling on hormone stimulation. The polypeptide is Progesterone receptor (PGR) (Pongo pygmaeus (Bornean orangutan)).